A 70-amino-acid polypeptide reads, in one-letter code: Large ribosomal subunit protein bL31 (70 aa).

4 residues coordinate Zn(2+): Cys-16, Cys-18, Cys-37, and Cys-40.

It belongs to the bacterial ribosomal protein bL31 family. Type A subfamily. As to quaternary structure, part of the 50S ribosomal subunit. Zn(2+) serves as cofactor.

Its function is as follows. Binds the 23S rRNA. This is Large ribosomal subunit protein bL31 from Ectopseudomonas mendocina (strain ymp) (Pseudomonas mendocina).